A 255-amino-acid polypeptide reads, in one-letter code: Small ribosomal subunit protein uS2 (255 aa).

The tract at residues 226-255 (QGVSNEEVAAEQNIDLDEKEKSEETEATEE) is disordered.

Belongs to the universal ribosomal protein uS2 family.

The sequence is that of Small ribosomal subunit protein uS2 from Staphylococcus aureus (strain Mu3 / ATCC 700698).